The chain runs to 479 residues: Glutamate--tRNA ligase (479 aa).

The 'HIGH' region signature appears at 21–31 (PSPTGYLHVGG). Positions 248–252 (KLSKR) match the 'KMSKS' region motif. An ATP-binding site is contributed by K251.

It belongs to the class-I aminoacyl-tRNA synthetase family. Glutamate--tRNA ligase type 1 subfamily. In terms of assembly, monomer.

The protein localises to the cytoplasm. It carries out the reaction tRNA(Glu) + L-glutamate + ATP = L-glutamyl-tRNA(Glu) + AMP + diphosphate. Its function is as follows. Catalyzes the attachment of glutamate to tRNA(Glu) in a two-step reaction: glutamate is first activated by ATP to form Glu-AMP and then transferred to the acceptor end of tRNA(Glu). The protein is Glutamate--tRNA ligase of Actinobacillus pleuropneumoniae serotype 5b (strain L20).